The primary structure comprises 576 residues: Interleukin-1 receptor type 1 (576 aa).

Residues 1-19 (MENMKVLLGFICLIVPLLS) form the signal peptide. Ig-like C2-type domains lie at 20 to 115 (LETD…ITMS), 121 to 217 (PGLC…RVIT), and 229 to 331 (PVIM…VRLV). Over 20 to 338 (LETDKCTEYP…RLVYPVPDFK (319 aa)) the chain is Extracellular. 3 disulfides stabilise this stretch: C25–C107, C46–C99, and C145–C199. Residues N63 and N103 are each glycosylated (N-linked (GlcNAc...) asparagine). 3 N-linked (GlcNAc...) asparagine glycosylation sites follow: N236, N252, and N266. C251 and C315 are joined by a disulfide. A helical membrane pass occupies residues 339-359 (NYLIGGFAIFTATAVFCACIY). The Cytoplasmic segment spans residues 360–576 (KVFKVDIVLW…LQAETHLPLG (217 aa)). Residues 386-541 (RTYDAYVLYP…RFWKNLRYQM (156 aa)) form the TIR domain. The active site involves E473. Y499 carries the phosphotyrosine modification. T556 is subject to Phosphothreonine; by PKC.

Belongs to the interleukin-1 receptor family. In terms of assembly, the interleukin-1 receptor complex is a heterodimer of IL1R1 and IL1RAP. Interacts with PIK3R1. Interacts with IL1A. Post-translationally, a soluble form (sIL1R1) is probably produced by proteolytic cleavage at the cell surface (shedding). Rapidly phosphorylated on Tyr-499 in response to IL-1, which creates a SH2 binding site for the PI 3-kinase regulatory subunit PIK3R1.

Its subcellular location is the membrane. It localises to the cell membrane. The protein resides in the secreted. The enzyme catalyses NAD(+) + H2O = ADP-D-ribose + nicotinamide + H(+). Its function is as follows. Receptor for IL1A, IL1B and IL1RN. After binding to interleukin-1 associates with the coreceptor IL1RAP to form the high affinity interleukin-1 receptor complex which mediates interleukin-1-dependent activation of NF-kappa-B, MAPK and other pathways. Signaling involves the recruitment of adapter molecules such as TOLLIP, MYD88, and IRAK1 or IRAK2 via the respective TIR domains of the receptor/coreceptor subunits. Binds ligands with comparable affinity and binding of antagonist IL1RN prevents association with IL1RAP to form a signaling complex. Involved in IL1B-mediated costimulation of IFNG production from T-helper 1 (Th1) cells. In Rattus norvegicus (Rat), this protein is Interleukin-1 receptor type 1 (Il1r1).